Reading from the N-terminus, the 375-residue chain is Succinyl-diaminopimelate desuccinylase (375 aa).

H66 is a binding site for Zn(2+). The active site involves D68. D99 serves as a coordination point for Zn(2+). The active-site Proton acceptor is the E133. Residues E134, E162, and H348 each contribute to the Zn(2+) site.

This sequence belongs to the peptidase M20A family. DapE subfamily. Homodimer. Zn(2+) serves as cofactor. Requires Co(2+) as cofactor.

The enzyme catalyses N-succinyl-(2S,6S)-2,6-diaminopimelate + H2O = (2S,6S)-2,6-diaminopimelate + succinate. The protein operates within amino-acid biosynthesis; L-lysine biosynthesis via DAP pathway; LL-2,6-diaminopimelate from (S)-tetrahydrodipicolinate (succinylase route): step 3/3. Its function is as follows. Catalyzes the hydrolysis of N-succinyl-L,L-diaminopimelic acid (SDAP), forming succinate and LL-2,6-diaminopimelate (DAP), an intermediate involved in the bacterial biosynthesis of lysine and meso-diaminopimelic acid, an essential component of bacterial cell walls. This chain is Succinyl-diaminopimelate desuccinylase, found in Janthinobacterium sp. (strain Marseille) (Minibacterium massiliensis).